The following is a 508-amino-acid chain: CBL-interacting protein kinase 19 (508 aa).

Positions 1-24 (MAATPPSSQHRRPLSSSASAASLA) are disordered. The segment covering 14–24 (LSSSASAASLA) has biased composition (low complexity). The region spanning 37-291 (YELGRLLGHG…VKEVMESRWF (255 aa)) is the Protein kinase domain. ATP is bound by residues 43-51 (LGHGTFAKV) and Lys-66. Asp-159 (proton acceptor) is an active-site residue. The interval 177 to 206 (DFGLSAVADQFHPDGLLHTFCGTPSYVAPE) is activation loop. Positions 311–372 (ADGDNDMPEL…EERRQRPLGS (62 aa)) are disordered. The segment covering 313-322 (GDNDMPELEP) has biased composition (acidic residues). Over residues 323-337 (SEPPPPPPFPPPPPQ) the composition is skewed to pro residues. Acidic residues predominate over residues 338–347 (QDDDGEESGW). The NAF domain occupies 354–398 (ASCPATLSSEERRQRPLGSLTRPASLNAFDIISFSKGFDLSGLFE). Positions 401-430 (GSEVRFISAEPMQTIITKLEEIAKVKSFFV) are PPI.

This sequence belongs to the protein kinase superfamily. CAMK Ser/Thr protein kinase family. SNF1 subfamily. It depends on Mn(2+) as a cofactor. In terms of processing, autophosphorylated. In terms of tissue distribution, expressed in roots, leaf blades and sheaths and panicles.

The catalysed reaction is L-seryl-[protein] + ATP = O-phospho-L-seryl-[protein] + ADP + H(+). It carries out the reaction L-threonyl-[protein] + ATP = O-phospho-L-threonyl-[protein] + ADP + H(+). CIPK serine-threonine protein kinases interact with CBL proteins. Binding of a CBL protein to the regulatory NAF domain of CIPK protein lead to the activation of the kinase in a calcium-dependent manner. The polypeptide is CBL-interacting protein kinase 19 (CIPK19) (Oryza sativa subsp. japonica (Rice)).